The primary structure comprises 332 residues: Phosphate acyltransferase (332 aa).

This sequence belongs to the PlsX family. As to quaternary structure, homodimer. Probably interacts with PlsY.

The protein localises to the cytoplasm. The enzyme catalyses a fatty acyl-[ACP] + phosphate = an acyl phosphate + holo-[ACP]. The protein operates within lipid metabolism; phospholipid metabolism. Catalyzes the reversible formation of acyl-phosphate (acyl-PO(4)) from acyl-[acyl-carrier-protein] (acyl-ACP). This enzyme utilizes acyl-ACP as fatty acyl donor, but not acyl-CoA. The polypeptide is Phosphate acyltransferase (Streptococcus sanguinis (strain SK36)).